A 239-amino-acid polypeptide reads, in one-letter code: Peptidyl-tRNA hydrolase (239 aa).

Y14 is a binding site for tRNA. Residue H19 is the Proton acceptor of the active site. The tRNA site is built by F64, N66, and N112. Residues 188-239 (APPRSSTSKPKAQDNREDAAQAAEERSETRTPPEARPEDTRSALQKLADKFR) form a disordered region. Positions 198–239 (KAQDNREDAAQAAEERSETRTPPEARPEDTRSALQKLADKFR) are enriched in basic and acidic residues.

This sequence belongs to the PTH family. In terms of assembly, monomer.

The protein resides in the cytoplasm. It catalyses the reaction an N-acyl-L-alpha-aminoacyl-tRNA + H2O = an N-acyl-L-amino acid + a tRNA + H(+). Functionally, hydrolyzes ribosome-free peptidyl-tRNAs (with 1 or more amino acids incorporated), which drop off the ribosome during protein synthesis, or as a result of ribosome stalling. In terms of biological role, catalyzes the release of premature peptidyl moieties from peptidyl-tRNA molecules trapped in stalled 50S ribosomal subunits, and thus maintains levels of free tRNAs and 50S ribosomes. This Jannaschia sp. (strain CCS1) protein is Peptidyl-tRNA hydrolase.